Here is a 674-residue protein sequence, read N- to C-terminus: Electrogenic aspartate/glutamate antiporter SLC25A13, mitochondrial (674 aa).

Residue Ala2 is modified to N-acetylalanine. The regulatory N-terminal domain stretch occupies residues 2 to 295; it reads AAAKVALTKR…TLADIERIAP (294 aa). The Mitochondrial intermembrane segment spans residues 2-331; sequence AAAKVALTKR…LLQVAESAYR (330 aa). EF-hand domains are found at residues 51 to 86, 87 to 122, 123 to 157, and 158 to 193; these read SQPN…SVLC, APDA…TTIH, QHIP…FLLE, and IQLE…IRPH. Residues Asp66, Thr68, Asp70, Leu72, and Glu77 each coordinate Ca(2+). Residues 296 to 311 form a linker loop domain region; it reads LEEGTLPFNLAEAQRQ. Residues 321–611 form a carrier domain region; it reads VLLQVAESAY…LQRWFYIDFG (291 aa). Solcar repeat units follow at residues 326-418, 426-510, and 518-605; these read AESA…VRDK, VPLA…ARAS, and VSPG…LQRW. A helical transmembrane segment spans residues 332-349; it reads FGLGSVAGAVGATAVYPI. At 350–392 the chain is on the mitochondrial matrix side; that stretch reads DLVKTRMQNQRSTGSFVGELMYKNSFDCFKKVLRYEGFFGLYR. Residues Lys353 and Lys372 each carry the N6-acetyllysine modification. A helical transmembrane segment spans residues 393 to 412; it reads GLLPQLLGVAPEKAIKLTVN. At 413-435 the chain is on the mitochondrial intermembrane side; sequence DFVRDKFMHKDGSVPLAAEILAG. A helical membrane pass occupies residues 436–449; the sequence is GCAGGSQVIFTNPL. Topologically, residues 450–484 are mitochondrial matrix; the sequence is EIVKIRLQVAGEITTGPRVSALSVVRDLGFFGIYK. Position 453 is an N6-methyllysine (Lys453). Lys484 carries the post-translational modification N6-acetyllysine; alternate. Lys484 carries the N6-succinyllysine; alternate modification. The helical transmembrane segment at 485–504 threads the bilayer; that stretch reads GAKACFLRDIPFSAIYFPCY. The Mitochondrial intermembrane segment spans residues 505–523; the sequence is AHARASFANEDGQVSPGSL. Residues 524 to 541 traverse the membrane as a helical segment; sequence LLAGAIAGMPAASLVTPA. The Mitochondrial matrix portion of the chain corresponds to 542–580; it reads DVIKTRLQVAARAGQTTYSGVIDCFKKILREEGPKALWK. Lys580 carries the post-translational modification N6-succinyllysine. The chain crosses the membrane as a helical span at residues 581-599; the sequence is GAARVFRSSPQFGVTLLTY. Topologically, residues 600–674 are mitochondrial intermembrane; sequence ELLQRWFYID…PTSEAIGGGP (75 aa). A C-terminal domain region spans residues 612–674; it reads GVKPMGSEPV…PTSEAIGGGP (63 aa). Lys661 bears the N6-acetyllysine mark.

Belongs to the mitochondrial carrier (TC 2.A.29) family. In terms of assembly, homodimer (via N-terminus).

It is found in the mitochondrion inner membrane. It carries out the reaction L-aspartate(in) + L-glutamate(out) + H(+)(out) = L-aspartate(out) + L-glutamate(in) + H(+)(in). It catalyses the reaction 3-sulfino-L-alanine(out) + L-glutamate(in) + H(+)(in) = 3-sulfino-L-alanine(in) + L-glutamate(out) + H(+)(out). The catalysed reaction is 3-sulfino-L-alanine(out) + L-aspartate(in) = 3-sulfino-L-alanine(in) + L-aspartate(out). In terms of biological role, mitochondrial electrogenic aspartate/glutamate antiporter that favors efflux of aspartate and entry of glutamate and proton within the mitochondria as part of the malate-aspartate shuttle. Also mediates the uptake of L-cysteinesulfinate (3-sulfino-L-alanine) by mitochondria in exchange of L-glutamate and proton. Can also exchange L-cysteinesulfinate with aspartate in their anionic form without any proton translocation. Lacks transport activity towards gamma-aminobutyric acid (GABA). The chain is Electrogenic aspartate/glutamate antiporter SLC25A13, mitochondrial from Macaca fascicularis (Crab-eating macaque).